The sequence spans 402 residues: Tyrosine--tRNA ligase (402 aa).

The 'HIGH' region motif lies at 47 to 56 (PTAPDLHLGH). The short motif at 232 to 236 (KMSKS) is the 'KMSKS' region element. Lys-235 contacts ATP. Residues 341 to 401 (VGVLDVLKQI…GKKRFMKLNI (61 aa)) form the S4 RNA-binding domain.

It belongs to the class-I aminoacyl-tRNA synthetase family. TyrS type 2 subfamily. Homodimer.

It localises to the cytoplasm. The catalysed reaction is tRNA(Tyr) + L-tyrosine + ATP = L-tyrosyl-tRNA(Tyr) + AMP + diphosphate + H(+). In terms of biological role, catalyzes the attachment of tyrosine to tRNA(Tyr) in a two-step reaction: tyrosine is first activated by ATP to form Tyr-AMP and then transferred to the acceptor end of tRNA(Tyr). This chain is Tyrosine--tRNA ligase, found in Helicobacter pylori (strain J99 / ATCC 700824) (Campylobacter pylori J99).